Consider the following 213-residue polypeptide: Flagellin A1 (213 aa).

Residues Met-1–Gly-10 constitute a propeptide that is removed on maturation. N-linked (GlcNAc...) asparagine glycans are attached at residues Asn-70, Asn-115, and Asn-172.

It belongs to the archaeal flagellin family. Post-translationally, glycosylated by a pentasaccharide similar to the S-layer glycoprotein, probably comprising a hexose, 2 hexuronic acids, a methyl ester of a hexuronic acid and mannose. Glycosylation is required for biosynthesis of stable flagella.

The protein resides in the archaeal flagellum. In terms of biological role, major flagellin required for motility. Not involved in PibD-dependent surface adhesion. Much more abundant in cells compared to FlgA2. The sequence is that of Flagellin A1 (flgA1) from Haloferax volcanii (strain ATCC 29605 / DSM 3757 / JCM 8879 / NBRC 14742 / NCIMB 2012 / VKM B-1768 / DS2) (Halobacterium volcanii).